Here is an 875-residue protein sequence, read N- to C-terminus: F-box only protein 41 (875 aa).

Disordered regions lie at residues 85–110 (ESTSFQGKEQAAGPSPAAPHLLHHHH), 165–194 (SSACSTPPPGPGPGPCPGPASASPASPSPA), and 347–542 (SSSC…PSRS). The segment covering 170-182 (TPPPGPGPGPCPG) has biased composition (pro residues). A compositionally biased stretch (low complexity) spans 183-194 (PASASPASPSPA). Residues 209–351 (ALEKLEVDRR…QLQVISSSCG (143 aa)) adopt a coiled-coil conformation. Residues 347–356 (SSSCGSTPSA) are compositionally biased toward polar residues. The span at 359–368 (GRGGGGGGAG) shows a compositional bias: gly residues. Omega-N-methylarginine is present on arginine 360. A compositionally biased stretch (polar residues) spans 395-416 (HGSSPSTGASSRVPAASQSSGC). A Phosphoserine modification is found at serine 478. Threonine 479 carries the post-translational modification Phosphothreonine. Positions 496–540 (SEAEGPLDAPRPGPAMAGPLSSCRLSARPEGGSGRGRRAERVSPS) constitute an F-box domain. Phosphoserine is present on serine 762.

As to quaternary structure, directly interacts with SKP1 and CUL1.

Its function is as follows. Substrate-recognition component of the SCF (SKP1-CUL1-F-box protein)-type E3 ubiquitin ligase complex. The sequence is that of F-box only protein 41 (FBXO41) from Homo sapiens (Human).